We begin with the raw amino-acid sequence, 129 residues long: Glycine cleavage system H protein (129 aa).

A Lipoyl-binding domain is found at Val-24–Lys-106. N6-lipoyllysine is present on Lys-65.

This sequence belongs to the GcvH family. The glycine cleavage system is composed of four proteins: P, T, L and H. It depends on (R)-lipoate as a cofactor.

Functionally, the glycine cleavage system catalyzes the degradation of glycine. The H protein shuttles the methylamine group of glycine from the P protein to the T protein. The chain is Glycine cleavage system H protein from Alteromonas mediterranea (strain DSM 17117 / CIP 110805 / LMG 28347 / Deep ecotype).